The primary structure comprises 87 residues: Long neurotoxin homolog (87 aa).

An N-terminal signal peptide occupies residues 1–21 (MKTLLLTLVVVTIVCLDLGYT). 5 disulfides stabilise this stretch: Cys-24/Cys-47, Cys-27/Cys-32, Cys-40/Cys-64, Cys-68/Cys-80, and Cys-81/Cys-86.

In terms of tissue distribution, expressed by the venom gland.

Its subcellular location is the secreted. In terms of biological role, inhibits carbachol-induced muscle contraction in a reversible manner. This is Long neurotoxin homolog from Bungarus multicinctus (Many-banded krait).